The sequence spans 133 residues: MESWALTTPPIDIVNQYLFFIKRKTNYMATYYYALASQKFLLEEEPFEEVLKERRRDYGEKNKEIDFWQVIQPAFLNAPELAEAKAKAPEKNVAIVSTNKSFIVWVKLRLEYVLTGEFEAPSDAIPDPLASLD.

Belongs to the ycf54 family.

This Synechocystis sp. (strain ATCC 27184 / PCC 6803 / Kazusa) protein is Ycf54-like protein.